We begin with the raw amino-acid sequence, 443 residues long: MQPTNFNTLINWQQCSEEQQKALLSRPAINASERITAAVSDILDRVKAEGDSALRDFSQRFDHVQVADIRITASEIAAASARLSDDVKHAMAQAVRNIEIFHNAQKMPVVDVETQPGVRCQQITRPIASVGLYIPGGSAPLPSTVLMLGTPARIAGCQRVVLCSPPPIADEILYAAQLCGIQEVFQIGGAQAIAAMAFGSESVPKVHKIFGPGNAYVTEAKRQVSQRLDGAAIDMPAGPSEVLVIADSGATPAFIAADLLSQAEHGPDSQVILLTPDAAIAQAVAVEVEQQLALLSRADIARQALESSRLIVTNDLQQCIDISNAYGPEHLILQIRQPEEIIDQIDNAGSVFMGDWSPESAGDYASGTNHVLPTYGYTSTYSSLGLADFVKRMTVQQLTPQGLLGLASTIETLAQAEQLTAHKNAVTLRVTALNNALTAVNKE.

The NAD(+) site is built by Tyr133, Gln191, and Asn214. Substrate-binding residues include Ser240, Gln262, and His265. Zn(2+)-binding residues include Gln262 and His265. Residues Glu329 and His330 each act as proton acceptor in the active site. Positions 330, 363, 417, and 422 each coordinate substrate. Asp363 is a binding site for Zn(2+). His422 serves as a coordination point for Zn(2+).

It belongs to the histidinol dehydrogenase family. In terms of assembly, homodimer. Requires Zn(2+) as cofactor.

The enzyme catalyses L-histidinol + 2 NAD(+) + H2O = L-histidine + 2 NADH + 3 H(+). It functions in the pathway amino-acid biosynthesis; L-histidine biosynthesis; L-histidine from 5-phospho-alpha-D-ribose 1-diphosphate: step 9/9. Functionally, catalyzes the sequential NAD-dependent oxidations of L-histidinol to L-histidinaldehyde and then to L-histidine. This Yersinia pestis protein is Histidinol dehydrogenase.